Reading from the N-terminus, the 157-residue chain is Transcription elongation factor GreA (157 aa).

The stretch at 47–75 forms a coiled coil; that stretch reads SGEYEDAKKAQALLEGRIRELKHLLSRAE.

This sequence belongs to the GreA/GreB family.

Functionally, necessary for efficient RNA polymerase transcription elongation past template-encoded arresting sites. The arresting sites in DNA have the property of trapping a certain fraction of elongating RNA polymerases that pass through, resulting in locked ternary complexes. Cleavage of the nascent transcript by cleavage factors such as GreA or GreB allows the resumption of elongation from the new 3'terminus. GreA releases sequences of 2 to 3 nucleotides. The sequence is that of Transcription elongation factor GreA from Chloroflexus aggregans (strain MD-66 / DSM 9485).